Here is a 230-residue protein sequence, read N- to C-terminus: 6-carboxyhexanoate--CoA ligase (230 aa).

The protein belongs to the BioW family. In terms of assembly, homodimer. The cofactor is Mg(2+).

The catalysed reaction is heptanedioate + ATP + CoA = 6-carboxyhexanoyl-CoA + AMP + diphosphate. The protein operates within metabolic intermediate metabolism; pimeloyl-CoA biosynthesis; pimeloyl-CoA from pimelate: step 1/1. Catalyzes the transformation of pimelate into pimeloyl-CoA with concomitant hydrolysis of ATP to AMP. This is 6-carboxyhexanoate--CoA ligase from Staphylococcus aureus (strain Mu3 / ATCC 700698).